The primary structure comprises 166 residues: Myosin regulatory light chain 2, ventricular/cardiac muscle isoform (166 aa).

Alanine 2 is subject to N,N,N-trimethylalanine. Phosphoserine; by MLCK occurs at positions 14 and 15. Serine 19 bears the Phosphoserine mark. EF-hand domains lie at threonine 24–valine 59, aspartate 94–arginine 129, and phenylalanine 130–lysine 165. Aspartate 37, asparagine 39, aspartate 41, and aspartate 48 together coordinate Ca(2+). Threonine 52 carries the phosphothreonine modification.

Myosin is a hexamer of 2 heavy chains and 4 light chains. Interacts with MYOC. N-terminus is methylated by METTL11A/NTM1. Post-translationally, phosphorylated by MYLK3 and MYLK2; promotes cardiac muscle contraction and function. Dephosphorylated by PPP1CB complexed to PPP1R12B. The phosphorylated form in adult is expressed as gradients across the heart from endocardium (low phosphorylation) to epicardium (high phosphorylation); regulates cardiac torsion and workload distribution. In terms of tissue distribution, abundantly expressed in both cardiac and slow skeletal muscle. In the adult heart, the phosphorylated form is highly expressed in epicardium and weakly in endocardium.

The protein localises to the cytoplasm. Its subcellular location is the myofibril. It localises to the sarcomere. It is found in the a band. In terms of biological role, contractile protein that plays a role in heart development and function. Following phosphorylation, plays a role in cross-bridge cycling kinetics and cardiac muscle contraction by increasing myosin lever arm stiffness and promoting myosin head diffusion; as a consequence of the increase in maximum contraction force and calcium sensitivity of contraction force. These events altogether slow down myosin kinetics and prolong duty cycle resulting in accumulated myosins being cooperatively recruited to actin binding sites to sustain thin filament activation as a means to fine-tune myofilament calcium sensitivity to force. During cardiogenesis plays an early role in cardiac contractility by promoting cardiac myofibril assembly. The chain is Myosin regulatory light chain 2, ventricular/cardiac muscle isoform from Mus musculus (Mouse).